The following is a 431-amino-acid chain: Glutamate-1-semialdehyde 2,1-aminomutase (431 aa).

K265 carries the N6-(pyridoxal phosphate)lysine modification.

The protein belongs to the class-III pyridoxal-phosphate-dependent aminotransferase family. HemL subfamily. In terms of assembly, homodimer. Pyridoxal 5'-phosphate is required as a cofactor.

Its subcellular location is the cytoplasm. The enzyme catalyses (S)-4-amino-5-oxopentanoate = 5-aminolevulinate. The protein operates within porphyrin-containing compound metabolism; protoporphyrin-IX biosynthesis; 5-aminolevulinate from L-glutamyl-tRNA(Glu): step 2/2. This Pseudoalteromonas atlantica (strain T6c / ATCC BAA-1087) protein is Glutamate-1-semialdehyde 2,1-aminomutase.